A 208-amino-acid polypeptide reads, in one-letter code: Large ribosomal subunit protein uL4 (208 aa).

The disordered stretch occupies residues arginine 45–glycine 85. The span at glutamine 46 to arginine 66 shows a compositional bias: basic residues. Residues glycine 69–serine 80 are compositionally biased toward polar residues.

The protein belongs to the universal ribosomal protein uL4 family. Part of the 50S ribosomal subunit.

In terms of biological role, one of the primary rRNA binding proteins, this protein initially binds near the 5'-end of the 23S rRNA. It is important during the early stages of 50S assembly. It makes multiple contacts with different domains of the 23S rRNA in the assembled 50S subunit and ribosome. Functionally, forms part of the polypeptide exit tunnel. This Chlorobium phaeobacteroides (strain DSM 266 / SMG 266 / 2430) protein is Large ribosomal subunit protein uL4.